We begin with the raw amino-acid sequence, 376 residues long: UPF0754 membrane protein SE_1527 (376 aa).

The next 2 helical transmembrane spans lie at 4-24 (ILLV…TNMI) and 356-376 (TLGF…AIFV).

Belongs to the UPF0754 family.

It localises to the cell membrane. The chain is UPF0754 membrane protein SE_1527 from Staphylococcus epidermidis (strain ATCC 12228 / FDA PCI 1200).